Here is a 340-residue protein sequence, read N- to C-terminus: Cobalt-precorrin-5B C(1)-methyltransferase (340 aa).

The protein belongs to the CbiD family.

The enzyme catalyses Co-precorrin-5B + S-adenosyl-L-methionine = Co-precorrin-6A + S-adenosyl-L-homocysteine. Its pathway is cofactor biosynthesis; adenosylcobalamin biosynthesis; cob(II)yrinate a,c-diamide from sirohydrochlorin (anaerobic route): step 6/10. Catalyzes the methylation of C-1 in cobalt-precorrin-5B to form cobalt-precorrin-6A. This is Cobalt-precorrin-5B C(1)-methyltransferase from Methanococcoides burtonii (strain DSM 6242 / NBRC 107633 / OCM 468 / ACE-M).